Consider the following 500-residue polypeptide: ATP synthase subunit alpha (500 aa).

169–176 contributes to the ATP binding site; it reads GDRQTGKT.

Belongs to the ATPase alpha/beta chains family. In terms of assembly, F-type ATPases have 2 components, CF(1) - the catalytic core - and CF(0) - the membrane proton channel. CF(1) has five subunits: alpha(3), beta(3), gamma(1), delta(1), epsilon(1). CF(0) has three main subunits: a(1), b(2) and c(9-12). The alpha and beta chains form an alternating ring which encloses part of the gamma chain. CF(1) is attached to CF(0) by a central stalk formed by the gamma and epsilon chains, while a peripheral stalk is formed by the delta and b chains.

Its subcellular location is the cell inner membrane. The enzyme catalyses ATP + H2O + 4 H(+)(in) = ADP + phosphate + 5 H(+)(out). Functionally, produces ATP from ADP in the presence of a proton gradient across the membrane. The alpha chain is a regulatory subunit. In Fusobacterium nucleatum subsp. nucleatum (strain ATCC 25586 / DSM 15643 / BCRC 10681 / CIP 101130 / JCM 8532 / KCTC 2640 / LMG 13131 / VPI 4355), this protein is ATP synthase subunit alpha.